The sequence spans 527 residues: Ankyrin repeat domain-containing protein 42 (527 aa).

Residues 1–27 (MPGVANPGPSKSRRETADSSSRKKVHF) are disordered. The segment covering 12 to 21 (SRRETADSSS) has biased composition (basic and acidic residues). ANK repeat units follow at residues 25 to 54 (VHFS…NLNE), 59 to 88 (HQFT…DATQ), 92 to 121 (RGWT…NLAT), 125 to 154 (RGCT…DPSV), 158 to 187 (REWK…GIED), 191 to 220 (NGNL…SATQ), 228 to 257 (NGEN…EGSH), 263 to 293 (DLAF…NLNE), 297 to 326 (NGST…ESNI), and 330 to 360 (AGET…EIDD). Positions 395 to 484 (NARMRAHKKI…ETLQKIQVTS (90 aa)) form a coiled coil.

In Mus musculus (Mouse), this protein is Ankyrin repeat domain-containing protein 42 (Ankrd42).